The following is a 70-amino-acid chain: uncharacterized protein (70 aa).

2 helical membrane passes run 19–39 (VIALVVFGGLIVSVVGFVVGL) and 40–60 (LFKLLVFVALVGGLIYVVRKF).

It localises to the cell membrane. This is an uncharacterized protein from Streptomyces coelicolor (strain ATCC BAA-471 / A3(2) / M145).